We begin with the raw amino-acid sequence, 353 residues long: Quinolinate synthase (353 aa).

Histidine 49 and serine 70 together coordinate iminosuccinate. [4Fe-4S] cluster is bound at residue cysteine 115. Residues 141–143 (YAN) and serine 158 each bind iminosuccinate. Cysteine 202 is a binding site for [4Fe-4S] cluster. Residues 228 to 230 (HPE) and threonine 245 contribute to the iminosuccinate site. Cysteine 299 serves as a coordination point for [4Fe-4S] cluster.

It belongs to the quinolinate synthase family. Type 1 subfamily. It depends on [4Fe-4S] cluster as a cofactor.

It localises to the cytoplasm. It carries out the reaction iminosuccinate + dihydroxyacetone phosphate = quinolinate + phosphate + 2 H2O + H(+). The protein operates within cofactor biosynthesis; NAD(+) biosynthesis; quinolinate from iminoaspartate: step 1/1. Catalyzes the condensation of iminoaspartate with dihydroxyacetone phosphate to form quinolinate. This chain is Quinolinate synthase, found in Hahella chejuensis (strain KCTC 2396).